Reading from the N-terminus, the 302-residue chain is RNA polymerase sigma factor RpoH (302 aa).

The tract at residues 57–126 is sigma-70 factor domain-2; that stretch reads LVTSHLRLVA…IQEYILRSWS (70 aa). Residues 81–84 carry the Interaction with polymerase core subunit RpoC motif; sequence ELIS. The interval 235 to 286 is sigma-70 factor domain-4; it reads AMDKLNDREKHILTERRLSDNPKTLEELSQVYGVSRERVRQIEVRAFDKLQK. Residues 259-278 constitute a DNA-binding region (H-T-H motif); sequence LEELSQVYGVSRERVRQIEV.

It belongs to the sigma-70 factor family. RpoH subfamily. As to quaternary structure, interacts with the RNA polymerase core enzyme.

Its subcellular location is the cytoplasm. Functionally, sigma factors are initiation factors that promote the attachment of RNA polymerase to specific initiation sites and are then released. This sigma factor is involved in regulation of expression of heat shock genes. This is RNA polymerase sigma factor RpoH from Zymomonas mobilis subsp. mobilis (strain ATCC 31821 / ZM4 / CP4).